A 447-amino-acid polypeptide reads, in one-letter code: Na(+)-translocating NADH-quinone reductase subunit A (447 aa).

This sequence belongs to the NqrA family. Composed of six subunits; NqrA, NqrB, NqrC, NqrD, NqrE and NqrF.

It carries out the reaction a ubiquinone + n Na(+)(in) + NADH + H(+) = a ubiquinol + n Na(+)(out) + NAD(+). In terms of biological role, NQR complex catalyzes the reduction of ubiquinone-1 to ubiquinol by two successive reactions, coupled with the transport of Na(+) ions from the cytoplasm to the periplasm. NqrA to NqrE are probably involved in the second step, the conversion of ubisemiquinone to ubiquinol. This chain is Na(+)-translocating NADH-quinone reductase subunit A, found in Neisseria meningitidis serogroup A / serotype 4A (strain DSM 15465 / Z2491).